Reading from the N-terminus, the 152-residue chain is Small ribosomal subunit protein bS6 (152 aa).

The interval 96–152 (HEEGPSAMLQKRDRDDRGPREGGDRGPRREFGDRPPRRDGDFQRGPRPDRAPREDRA) is disordered.

The protein belongs to the bacterial ribosomal protein bS6 family.

Binds together with bS18 to 16S ribosomal RNA. This is Small ribosomal subunit protein bS6 from Rhizobium etli (strain ATCC 51251 / DSM 11541 / JCM 21823 / NBRC 15573 / CFN 42).